A 238-amino-acid polypeptide reads, in one-letter code: ATP synthase subunit a (238 aa).

5 helical membrane-spanning segments follow: residues 15 to 35, 76 to 96, 111 to 131, 167 to 187, and 208 to 230; these read IFNL…FVFI, YSLF…LGLM, PTAN…LTHI, LALR…LLLL, and AFSV…VYLG.

Belongs to the ATPase A chain family. As to quaternary structure, F-type ATPases have 2 components, CF(1) - the catalytic core - and CF(0) - the membrane proton channel. CF(1) has five subunits: alpha(3), beta(3), gamma(1), delta(1), epsilon(1). CF(0) has three main subunits: a(1), b(2) and c(9-12). The alpha and beta chains form an alternating ring which encloses part of the gamma chain. CF(1) is attached to CF(0) by a central stalk formed by the gamma and epsilon chains, while a peripheral stalk is formed by the delta and b chains.

The protein localises to the cell membrane. Functionally, key component of the proton channel; it plays a direct role in the translocation of protons across the membrane. The polypeptide is ATP synthase subunit a (Streptococcus pneumoniae serotype 19F (strain G54)).